The sequence spans 612 residues: Phosphopentomutase (612 aa).

Residue Ala-2 is modified to N-acetylalanine. Alpha-D-glucose 1,6-bisphosphate is bound by residues Arg-63 and Ser-165. Ser-165 (phosphoserine intermediate) is an active-site residue. 4 residues coordinate Mg(2+): Ser-165, Asp-322, Asp-324, and Asp-326. Ser-165 bears the Phosphoserine mark. Alpha-D-glucose 1,6-bisphosphate-binding residues include Asp-326, Arg-327, Thr-400, Glu-424, and Lys-438.

Belongs to the phosphohexose mutase family. In terms of assembly, monomer. Requires Mg(2+) as cofactor.

Its subcellular location is the cytoplasm. The protein localises to the cytosol. The enzyme catalyses alpha-D-ribose 1-phosphate = D-ribose 5-phosphate. It carries out the reaction 2-deoxy-alpha-D-ribose 1-phosphate = 2-deoxy-D-ribose 5-phosphate. It catalyses the reaction alpha-D-glucose 1-phosphate = alpha-D-glucose 6-phosphate. The catalysed reaction is O-phospho-L-seryl-[protein] + alpha-D-glucose 1-phosphate = alpha-D-glucose 1,6-bisphosphate + L-seryl-[protein]. The enzyme catalyses alpha-D-glucose 1,6-bisphosphate + L-seryl-[protein] = O-phospho-L-seryl-[protein] + alpha-D-glucose 6-phosphate. With respect to regulation, the phosphomutase activity is stimulated by glucose 1,6-bisphosphate. Its function is as follows. Catalyzes the conversion of the nucleoside breakdown products ribose-1-phosphate and deoxyribose-1-phosphate to the corresponding 5-phosphopentoses. Catalyzes the reversible isomerization of alpha-D-glucose 1-phosphate to alpha-D-glucose 6-phosphate but with a lower catalytic efficiency. The mechanism proceeds via the intermediate compound alpha-D-glucose 1,6-bisphosphate. In vitro, also has a low glucose 1,6-bisphosphate synthase activity which is most probably not physiologically relevant. This chain is Phosphopentomutase, found in Homo sapiens (Human).